The sequence spans 474 residues: NAD(P) transhydrogenase subunit beta (474 aa).

9 consecutive transmembrane segments (helical) span residues 4 to 24 (GLVQ…LAGL), 46 to 66 (IATI…AMII), 83 to 103 (MPEL…LVGF), 132 to 152 (VLTN…AVTF), 181 to 200 (LAAL…NPES), 202 to 222 (FPVL…VASI), 229 to 249 (VVVS…GFIL), 253 to 273 (LLIV…YIMC), and 321 to 341 (VIIT…VADI).

It belongs to the PNT beta subunit family. Heterodimer of an alpha and a beta chain.

It is found in the cell inner membrane. The catalysed reaction is NAD(+) + NADPH + H(+)(in) = NADH + NADP(+) + H(+)(out). In terms of biological role, the transhydrogenation between NADH and NADP is coupled to respiration and ATP hydrolysis and functions as a proton pump across the membrane. The chain is NAD(P) transhydrogenase subunit beta (pntB) from Haemophilus influenzae (strain ATCC 51907 / DSM 11121 / KW20 / Rd).